We begin with the raw amino-acid sequence, 72 residues long: MTNEIKTLSERIDTLETRLAYQDDTIETLNQTITAQWKQIDALTRQIAQLSERLQEAETNAPGPANERPPHY.

Belongs to the SlyX family.

This chain is Protein SlyX homolog, found in Bradyrhizobium diazoefficiens (strain JCM 10833 / BCRC 13528 / IAM 13628 / NBRC 14792 / USDA 110).